The following is a 420-amino-acid chain: Acyl-coenzyme A amino acid N-acyltransferase 2 (420 aa).

Residues Ser-235, Asp-329, and His-363 each act as charge relay system in the active site. The Microbody targeting signal signature appears at 418–420 (SKL).

It belongs to the C/M/P thioester hydrolase family.

The protein localises to the peroxisome. Its function is as follows. Acyltransferase which efficiently conjugates very long-chain and long-chain fatty acids to taurine. Shows no conjugation activity in the presence of glycine. The chain is Acyl-coenzyme A amino acid N-acyltransferase 2 from Mus musculus (Mouse).